A 132-amino-acid chain; its full sequence is Small ribosomal subunit protein uS8 (132 aa).

This sequence belongs to the universal ribosomal protein uS8 family. In terms of assembly, part of the 30S ribosomal subunit. Contacts proteins S5 and S12.

One of the primary rRNA binding proteins, it binds directly to 16S rRNA central domain where it helps coordinate assembly of the platform of the 30S subunit. The polypeptide is Small ribosomal subunit protein uS8 (Brucella ovis (strain ATCC 25840 / 63/290 / NCTC 10512)).